A 385-amino-acid polypeptide reads, in one-letter code: Isomaltose glucohydrolase (385 aa).

Position 125 (W125) interacts with substrate. The active-site Proton acceptor is the D175. E178 serves as the catalytic Proton donor. E335 functions as the Proton acceptor in the catalytic mechanism.

The protein belongs to the glycosyl hydrolase 15 family.

The protein resides in the cytoplasm. It carries out the reaction isomaltose + H2O = beta-D-glucose + D-glucose. Its function is as follows. Involved in the intracellular degradation of the cyclic tetrasaccharide cyclobis-(1-6)-alpha-nigerosyl (CNN) formed extracellularly from starch. Catalyzes the hydrolysis of alpha-1,6-glucosidic linkage from the non-reducing end of isomaltose to yield beta-D-glucose and D-glucose. Can also act on panose and isomaltotriose at a lower rate. It displays low or no activity toward CNN and the general GH15 enzyme substrates such as maltose, soluble starch or dextran. The sequence is that of Isomaltose glucohydrolase from Kribbella flavida (strain DSM 17836 / JCM 10339 / NBRC 14399).